A 191-amino-acid chain; its full sequence is Cdc42 homolog (191 aa).

G10–T17 is a binding site for GTP. The short motif at Y32 to Y40 is the Effector region element. Residues D57 to Q61 and T115 to D118 contribute to the GTP site. At C188 the chain carries Cysteine methyl ester. Residue C188 is the site of S-geranylgeranyl cysteine attachment. Residues K189–L191 constitute a propeptide, removed in mature form.

It belongs to the small GTPase superfamily. Rho family. CDC42 subfamily.

The protein resides in the cell junction. Its subcellular location is the adherens junction. The protein localises to the cell membrane. In terms of biological role, regulates mbt kinase activity and is also required to recruit mbt to adherens junctions. Together with mbt, regulates photoreceptor cell morphogenesis. In Aedes aegypti (Yellowfever mosquito), this protein is Cdc42 homolog.